The sequence spans 329 residues: Aspartate--ammonia ligase (329 aa).

This sequence belongs to the class-II aminoacyl-tRNA synthetase family. AsnA subfamily.

It is found in the cytoplasm. The enzyme catalyses L-aspartate + NH4(+) + ATP = L-asparagine + AMP + diphosphate + H(+). It functions in the pathway amino-acid biosynthesis; L-asparagine biosynthesis; L-asparagine from L-aspartate (ammonia route): step 1/1. The polypeptide is Aspartate--ammonia ligase (Ureaplasma urealyticum serovar 10 (strain ATCC 33699 / Western)).